The chain runs to 53 residues: Photosystem II reaction center protein K (53 aa).

Residues Met1–Ala16 constitute a propeptide that is removed on maturation. The chain crosses the membrane as a helical span at residues Ile28–Ala48.

The protein belongs to the PsbK family. PSII is composed of 1 copy each of membrane proteins PsbA, PsbB, PsbC, PsbD, PsbE, PsbF, PsbH, PsbI, PsbJ, PsbK, PsbL, PsbM, PsbT, PsbX, PsbY, PsbZ, Psb30/Ycf12, at least 3 peripheral proteins of the oxygen-evolving complex and a large number of cofactors. It forms dimeric complexes.

It localises to the plastid. The protein resides in the chloroplast thylakoid membrane. Functionally, one of the components of the core complex of photosystem II (PSII). PSII is a light-driven water:plastoquinone oxidoreductase that uses light energy to abstract electrons from H(2)O, generating O(2) and a proton gradient subsequently used for ATP formation. It consists of a core antenna complex that captures photons, and an electron transfer chain that converts photonic excitation into a charge separation. This chain is Photosystem II reaction center protein K, found in Huperzia lucidula (Shining clubmoss).